The sequence spans 265 residues: Transmembrane protein 270 (265 aa).

Helical transmembrane passes span 72–92, 130–150, and 185–205; these read PLGQ…WLVL, LFLS…VVTW, and LYWW…YLIT. Residues 229-265 form a disordered region; the sequence is QEVEPQEVSGSSLLPSLSASSDSESGTVLPEQETPRE. Positions 237–253 are enriched in low complexity; it reads SGSSLLPSLSASSDSES.

It localises to the membrane. The protein is Transmembrane protein 270 of Homo sapiens (Human).